Reading from the N-terminus, the 246-residue chain is MKKPPVPLFQNGVRADGRAPDQMREVNITVGIVSNADGSAMVSYGATTAVAAVYGPREMHPRHLSLPDRGVMRVRYHMAPFSTKDERKSPTPTRREIEISKILREALEPAVVLEQYPRSRIDVFIEILQADGSTRVASLTAASLALADAGVYMRDLVIGVSVGLVDGAVVLDLNGLEDQYGEGDLPVGYMPNLKRFTLLQLDGAWTRDKFLEALNLAIKGAEFVYQKARDALKSKYMTIAEDIYGR.

Belongs to the RNase PH family. Rrp41 subfamily. Component of the archaeal exosome complex. Forms a hexameric ring-like arrangement composed of 3 Rrp41-Rrp42 heterodimers. The hexameric ring associates with a trimer of Rrp4 and/or Csl4 subunits.

Its subcellular location is the cytoplasm. Its function is as follows. Catalytic component of the exosome, which is a complex involved in RNA degradation. Has 3'-&gt;5' exoribonuclease activity. Can also synthesize heteromeric RNA-tails. The protein is Exosome complex component Rrp41 of Pyrobaculum islandicum (strain DSM 4184 / JCM 9189 / GEO3).